A 245-amino-acid polypeptide reads, in one-letter code: Large ribosomal subunit protein uL4 (245 aa).

Over residues 1–13 the composition is skewed to polar residues; sequence MSRVATSDPSVTA. Disordered stretches follow at residues 1–28, 56–114, and 224–245; these read MSRVATSDPSVTARTVAVHAPNGGEGGS, ARQG…QRTP, and TSTAGTEAAAGTEGVAGAEENK. Basic and acidic residues predominate over residues 59-71; that stretch reads GTHDTKTRGEVRG. Residues 72–83 show a composition bias toward basic residues; it reads GGRKPYRQKGTG.

The protein belongs to the universal ribosomal protein uL4 family. In terms of assembly, part of the 50S ribosomal subunit.

One of the primary rRNA binding proteins, this protein initially binds near the 5'-end of the 23S rRNA. It is important during the early stages of 50S assembly. It makes multiple contacts with different domains of the 23S rRNA in the assembled 50S subunit and ribosome. In terms of biological role, forms part of the polypeptide exit tunnel. This Frankia casuarinae (strain DSM 45818 / CECT 9043 / HFP020203 / CcI3) protein is Large ribosomal subunit protein uL4.